Reading from the N-terminus, the 414-residue chain is Serine/threonine transporter SstT (414 aa).

The Cytoplasmic portion of the chain corresponds to 2 to 15 (TTQRSPGLFRRLAH). The helical transmembrane segment at 16-36 (GSLVKQILVGLVLGILLAWIS) threads the bilayer. The Periplasmic portion of the chain corresponds to 37–45 (KPAAEAVGL). Residues 46–66 (LGTLFVGALKAVAPILVLMLV) form a helical membrane-spanning segment. Over 67 to 83 (MASIANHQHGQKTNIRP) the chain is Cytoplasmic. Residues 84–104 (ILFLYLLGTFSAALAAVVFSF) traverse the membrane as a helical segment. Topologically, residues 105–142 (AFPSTLHLSSSAGDISPPSGIVEVMRGLVMSMVSNPID) are periplasmic. The chain crosses the membrane as a helical span at residues 143 to 163 (ALLKGNYIGILVWAIGLGFAL). At 164–179 (RHGNETTKNLVNDMSN) the chain is on the cytoplasmic side. A helical membrane pass occupies residues 180-200 (AVTFMVKLVIRFAPFGIFGLV). Residues 201–217 (SSTLATTGFSTLWGYAQ) lie on the Periplasmic side of the membrane. A helical transmembrane segment spans residues 218 to 238 (LLVVLVGCMLLVALVVNPLLV). Residues 239-299 (WWKIRRNPFP…VSIPLGATIN (61 aa)) are Cytoplasmic-facing. The chain crosses the membrane as a helical span at residues 300 to 320 (MAGAAITITVLTLAAVNTLGI). Residues 321 to 331 (PVDLPTALLLS) are Periplasmic-facing. The chain crosses the membrane as a helical span at residues 332-352 (VVASLCACGASGVAGGSLLLI). The Cytoplasmic segment spans residues 353–414 (PLACNMFGIS…DRLANSALRN (62 aa)).

The protein belongs to the dicarboxylate/amino acid:cation symporter (DAACS) (TC 2.A.23) family.

It is found in the cell inner membrane. The catalysed reaction is L-serine(in) + Na(+)(in) = L-serine(out) + Na(+)(out). It carries out the reaction L-threonine(in) + Na(+)(in) = L-threonine(out) + Na(+)(out). Involved in the import of serine and threonine into the cell, with the concomitant import of sodium (symport system). The chain is Serine/threonine transporter SstT from Shigella flexneri.